We begin with the raw amino-acid sequence, 270 residues long: Shikimate dehydrogenase (NADP(+)) (270 aa).

Residues 14–16 (SKS) and Thr-60 each bind shikimate. Catalysis depends on Lys-64, which acts as the Proton acceptor. An NADP(+)-binding site is contributed by Glu-76. Positions 85 and 101 each coordinate shikimate. Residues 125-129 (GAGGA), 149-154 (NRTASR), and Met-213 each bind NADP(+). Tyr-215 serves as a coordination point for shikimate. An NADP(+)-binding site is contributed by Gly-236.

The protein belongs to the shikimate dehydrogenase family. In terms of assembly, homodimer.

It catalyses the reaction shikimate + NADP(+) = 3-dehydroshikimate + NADPH + H(+). It functions in the pathway metabolic intermediate biosynthesis; chorismate biosynthesis; chorismate from D-erythrose 4-phosphate and phosphoenolpyruvate: step 4/7. Its function is as follows. Involved in the biosynthesis of the chorismate, which leads to the biosynthesis of aromatic amino acids. Catalyzes the reversible NADPH linked reduction of 3-dehydroshikimate (DHSA) to yield shikimate (SA). In Stutzerimonas stutzeri (strain A1501) (Pseudomonas stutzeri), this protein is Shikimate dehydrogenase (NADP(+)).